Here is a 272-residue protein sequence, read N- to C-terminus: S-adenosylmethionine decarboxylase proenzyme (272 aa).

The active-site Schiff-base intermediate with substrate; via pyruvic acid is Ser122. The residue at position 122 (Ser122) is a Pyruvic acid (Ser); by autocatalysis. Residue His127 is the Proton acceptor; for processing activity of the active site. The active-site Proton donor; for catalytic activity is the Cys150.

This sequence belongs to the prokaryotic AdoMetDC family. Type 2 subfamily. Heterooctamer of four alpha and four beta chains arranged as a tetramer of alpha/beta heterodimers. Pyruvate is required as a cofactor. Post-translationally, is synthesized initially as an inactive proenzyme. Formation of the active enzyme involves a self-maturation process in which the active site pyruvoyl group is generated from an internal serine residue via an autocatalytic post-translational modification. Two non-identical subunits are generated from the proenzyme in this reaction, and the pyruvate is formed at the N-terminus of the alpha chain, which is derived from the carboxyl end of the proenzyme. The post-translation cleavage follows an unusual pathway, termed non-hydrolytic serinolysis, in which the side chain hydroxyl group of the serine supplies its oxygen atom to form the C-terminus of the beta chain, while the remainder of the serine residue undergoes an oxidative deamination to produce ammonia and the pyruvoyl group blocking the N-terminus of the alpha chain.

It carries out the reaction S-adenosyl-L-methionine + H(+) = S-adenosyl 3-(methylsulfanyl)propylamine + CO2. The protein operates within amine and polyamine biosynthesis; S-adenosylmethioninamine biosynthesis; S-adenosylmethioninamine from S-adenosyl-L-methionine: step 1/1. Catalyzes the decarboxylation of S-adenosylmethionine to S-adenosylmethioninamine (dcAdoMet), the propylamine donor required for the synthesis of the polyamines spermine and spermidine from the diamine putrescine. The protein is S-adenosylmethionine decarboxylase proenzyme of Clostridium botulinum (strain Alaska E43 / Type E3).